Here is a 330-residue protein sequence, read N- to C-terminus: tRNA U34 carboxymethyltransferase (330 aa).

Residues K91, W105, K110, G130, 152–154 (DPS), 181–182 (IE), M196, Y200, and R315 contribute to the carboxy-S-adenosyl-L-methionine site.

Belongs to the class I-like SAM-binding methyltransferase superfamily. CmoB family. Homotetramer.

The catalysed reaction is carboxy-S-adenosyl-L-methionine + 5-hydroxyuridine(34) in tRNA = 5-carboxymethoxyuridine(34) in tRNA + S-adenosyl-L-homocysteine + H(+). Its function is as follows. Catalyzes carboxymethyl transfer from carboxy-S-adenosyl-L-methionine (Cx-SAM) to 5-hydroxyuridine (ho5U) to form 5-carboxymethoxyuridine (cmo5U) at position 34 in tRNAs. The polypeptide is tRNA U34 carboxymethyltransferase (Shewanella sediminis (strain HAW-EB3)).